Here is a 1411-residue protein sequence, read N- to C-terminus: Alpha-latroinsectotoxin-Lt1a (1411 aa).

A propeptide spanning residues 1–35 (ACSSPEVSIFHFFVYAGSFVKNFKKMKGSSAISKR) is cleaved from the precursor. Residues 245–264 (ALYALFYGTETFISIMFYLV) are helix H8 is the probable transmembrane region of the tetrameric pore inserted in the target cell membrane. ANK repeat units lie at residues 462-495 (DIHRDLYNAAQVPYAREALSISRTLIQNGANVSE), 499-528 (LGRGAIHAAASAGNYDVGELLLNKDINLLE), 533-562 (NGYTPLHIAADSNKNDFVMFLIGNNADVNV), 567-597 (DLFTPLHLAARRDLTDVTQTLIDITEIDLNA), 601-630 (SGFTPLHLSISSTSETAAILIRNTNAVINI), 634-663 (VGLTPLHLATLQNNLSVSKLLAGKGAYLND), 667-697 (NGMTPLHYAAMTGNLEMVDFLLNQQYININA), 702-732 (KKWTPLHLAILFKKNDVAERLLSDENLNIRL), 736-765 (GGINPLHLASATGNKQLVIELLAKNADVTR), 769-798 (KGFSALHLGIIGKNEEIPFFLVEKGANVND), 802-831 (SGVTPLHFAAGLGKANIFRLLLSRGADIKA), 835-864 (NSQMPIHEAVSNGHLEIVRILIEKDPSLMN), 869-898 (RNEYPFYLAVEKRYKDIFDYFVSKDANVNE), 902-931 (NGNTLLHLFSSTGELEVVQFLMQNGANFRL), 935-965 (ERKTFFDLAIENGRLNIVAFAVEKNKVNLQA), 968-999 (RGKTILYHAICDSAKYDKIEIVKYFIEKLNES), 1000-1029 (ECNPLHEAAAYAHLDLVKYFVQERGINPAE), 1080-1109 (QENTPITVAIFANKVSILNYLVGIGADPNQ), 1112-1142 (DGDPPLYIAARQGRFEIVRCLIEVHKVDINT), and 1146-1175 (ERFTALHAAARNDFMDVVKYLVRQGADVNA). The propeptide occupies 1196-1411 (QSSRFLRSGH…KVNSNVSQIK (216 aa)). A compositionally biased stretch (polar residues) spans 1230–1249 (DKLTQQISSKGTRSDSNSTE). Positions 1230–1254 (DKLTQQISSKGTRSDSNSTEGKMHS) are disordered. An ANK 21 repeat occupies 1331 to 1361 (NVHSKIYKAIMSGRRSVISEMLCSFAEEYSK).

This sequence belongs to the cationic peptide 01 (latrotoxin) family. 02 (alpha-latroinsectotoxin) subfamily. In terms of assembly, homotetramer in membranes. In terms of tissue distribution, expressed by the venom gland.

The protein localises to the secreted. The protein resides in the target cell membrane. Its function is as follows. Insecticidal presynaptic neurotoxin that induces massive neurotransmitter release at insect (but not vertebrate) neuromuscular junctions. Native toxin forms cation-permeable pores (with high permeability to calcium) in lipid membranes locust muscle membrane and artificial lipid bilayers. May bind to insect neurexin-1 homolog, insect adhesion G protein-coupled receptor L1 homolog, and insect receptor-type tyrosine-protein phosphatase S homolog, and induces neurotransmitter exocytosis both by forming tetrameric pores in membranes and signaling via G protein-coupled receptor. Oligomerization is a process independent of divalent cations. The toxin forms channels with 0.55-0.58 nm entrance diameter and a relatively small conductance in planar phospholipid membranes. This Latrodectus tredecimguttatus (Mediterranean black widow spider) protein is Alpha-latroinsectotoxin-Lt1a.